The primary structure comprises 643 residues: Pseudouridylate synthase PUS7L (643 aa).

D284 serves as the catalytic Nucleophile. Positions 370–597 (GFVNYYGPQR…PGCYRPLLAK (228 aa)) constitute a TRUD domain.

Belongs to the pseudouridine synthase TruD family.

The enzyme catalyses a uridine in mRNA = a pseudouridine in mRNA. In terms of biological role, pseudouridine synthase that catalyzes pseudouridylation of mRNAs. The protein is Pseudouridylate synthase PUS7L (pus7l) of Danio rerio (Zebrafish).